The sequence spans 104 residues: Zinc finger C2H2 protein ECU02_0310 (104 aa).

The segment at 56–80 (FYCCECDRHFITEKVLMEHKRSNPH) adopts a C2H2-type zinc-finger fold.

Belongs to the ZNF593/BUD20 C2H2-type zinc-finger protein family. Associates with pre-60S ribosomal particles; released from the pre-60S particle very early in the cytoplasm.

It localises to the nucleus. The protein resides in the cytoplasm. Its function is as follows. Involved in pre-60S ribosomal particles maturation by promoting the nuclear export of the 60S ribosome. The polypeptide is Zinc finger C2H2 protein ECU02_0310 (Encephalitozoon cuniculi (strain GB-M1) (Microsporidian parasite)).